Here is a 132-residue protein sequence, read N- to C-terminus: Small ribosomal subunit protein uS8 (132 aa).

This sequence belongs to the universal ribosomal protein uS8 family. Part of the 30S ribosomal subunit. Contacts proteins S5 and S12.

In terms of biological role, one of the primary rRNA binding proteins, it binds directly to 16S rRNA central domain where it helps coordinate assembly of the platform of the 30S subunit. The chain is Small ribosomal subunit protein uS8 from Azorhizobium caulinodans (strain ATCC 43989 / DSM 5975 / JCM 20966 / LMG 6465 / NBRC 14845 / NCIMB 13405 / ORS 571).